The primary structure comprises 450 residues: Divalent metal cation transporter MntH (450 aa).

The next 11 helical transmembrane spans lie at 44-64 (LLAF…PGNW), 77-97 (TLLS…SLAA), 121-141 (FLLW…EVIG), 152-172 (IPLI…LLLM), 181-201 (AFVI…IVAA), 218-238 (IFTN…TVMP), 273-293 (IALM…AATF), 310-330 (LLSP…ALLA), 366-386 (GIAI…GTAD), 387-407 (LLVF…IPLV), and 419-439 (FAIS…IVVL).

The protein belongs to the NRAMP family.

The protein localises to the cell inner membrane. Its function is as follows. H(+)-stimulated, divalent metal cation uptake system. This Bradyrhizobium diazoefficiens (strain JCM 10833 / BCRC 13528 / IAM 13628 / NBRC 14792 / USDA 110) protein is Divalent metal cation transporter MntH.